Reading from the N-terminus, the 413-residue chain is Probable protein phosphatase 2C 78 (413 aa).

Residues 21–40 (KKATTTTRRRERSSSQAARR) are disordered. The PPM-type phosphatase domain maps to 111-409 (KYGVASVCGR…DNVSVVVVDL (299 aa)). Mn(2+) is bound by residues Asp153, Gly154, Asp327, and Asp400.

The protein belongs to the PP2C family. Mg(2+) serves as cofactor. The cofactor is Mn(2+).

Its subcellular location is the golgi apparatus. The protein resides in the nucleus. It catalyses the reaction O-phospho-L-seryl-[protein] + H2O = L-seryl-[protein] + phosphate. The catalysed reaction is O-phospho-L-threonyl-[protein] + H2O = L-threonyl-[protein] + phosphate. Functionally, acts as a negative regulator of abscisic acid (ABA) signaling for stomatal closure in leaves, and controls water loss during leaf senescence. Activated by the NAC029/NAP transcription factor during ABA signaling in senescing leaves. Functions as a negative regulator of osmotic stress and ABA signaling. Acts as a negative regulator of response to drought. The protein is Probable protein phosphatase 2C 78 of Arabidopsis thaliana (Mouse-ear cress).